The primary structure comprises 456 residues: 3-isopropylmalate dehydratase large subunit (456 aa).

Residues cysteine 336, cysteine 396, and cysteine 399 each contribute to the [4Fe-4S] cluster site.

The protein belongs to the aconitase/IPM isomerase family. LeuC type 1 subfamily. Heterodimer of LeuC and LeuD. [4Fe-4S] cluster serves as cofactor.

It catalyses the reaction (2R,3S)-3-isopropylmalate = (2S)-2-isopropylmalate. The protein operates within amino-acid biosynthesis; L-leucine biosynthesis; L-leucine from 3-methyl-2-oxobutanoate: step 2/4. Catalyzes the isomerization between 2-isopropylmalate and 3-isopropylmalate, via the formation of 2-isopropylmaleate. The sequence is that of 3-isopropylmalate dehydratase large subunit from Staphylococcus aureus (strain MW2).